Reading from the N-terminus, the 142-residue chain is Hemoglobin subunit alpha (142 aa).

One can recognise a Globin domain in the interval 2–142; the sequence is VLSSADKNNV…VSTVLTSKYR (141 aa). Residue S4 is modified to Phosphoserine. Residues K8 and K12 each carry the N6-succinyllysine modification. Position 17 is an N6-acetyllysine; alternate (K17). K17 carries the N6-succinyllysine; alternate modification. The residue at position 25 (Y25) is a Phosphotyrosine. S36 bears the Phosphoserine mark. Position 41 is an N6-succinyllysine (K41). Phosphoserine is present on S50. Position 59 (H59) interacts with O2. A heme b-binding site is contributed by H88. Phosphoserine is present on S103. Phosphothreonine is present on T109. S125 is modified (phosphoserine). T135 and T138 each carry phosphothreonine. At S139 the chain carries Phosphoserine.

The protein belongs to the globin family. Heterotetramer of two alpha chains and two beta chains. As to expression, red blood cells.

Its function is as follows. Involved in oxygen transport from the lung to the various peripheral tissues. In terms of biological role, hemopressin acts as an antagonist peptide of the cannabinoid receptor CNR1. Hemopressin-binding efficiently blocks cannabinoid receptor CNR1 and subsequent signaling. The chain is Hemoglobin subunit alpha (HBA) from Panthera onca (Jaguar).